Here is an 83-residue protein sequence, read N- to C-terminus: Mu-theraphotoxin-Hhn2g (83 aa).

An N-terminal signal peptide occupies residues 1–21 (MKASMYLALAGLVLLFVVGYA). Residues 22-48 (SESEEKEFPRELLSKIFAVDDFKGEER) constitute a propeptide that is removed on maturation. Intrachain disulfides connect Cys50/Cys65 and Cys57/Cys70. Position 81 is a leucine amide (Leu81).

The protein belongs to the neurotoxin 10 (Hwtx-1) family. 15 (Hntx-3) subfamily. As to quaternary structure, monomer. As to expression, expressed by the venom gland.

The protein localises to the secreted. In terms of biological role, lethal neurotoxin. Selectively blocks tetrodotoxin-sensitive voltage-gated sodium channels (Nav). Does not affect tetrodotoxin-resistant voltage-gated sodium channels or calcium channels. This chain is Mu-theraphotoxin-Hhn2g, found in Cyriopagopus hainanus (Chinese bird spider).